Here is a 173-residue protein sequence, read N- to C-terminus: Ribulose bisphosphate carboxylase small subunit, chloroplastic 3 (173 aa).

Residues 1–49 (MASIPATVATVAQANMVAPFTGLKSNAAFPVTKKVNDFSTLPSNGGRVQ) constitute a chloroplast transit peptide.

It belongs to the RuBisCO small chain family. As to quaternary structure, heterohexadecamer of 8 large and 8 small subunits.

The protein localises to the plastid. It localises to the chloroplast. RuBisCO catalyzes two reactions: the carboxylation of D-ribulose 1,5-bisphosphate, the primary event in carbon dioxide fixation, as well as the oxidative fragmentation of the pentose substrate. Both reactions occur simultaneously and in competition at the same active site. Although the small subunit is not catalytic it is essential for maximal activity. The polypeptide is Ribulose bisphosphate carboxylase small subunit, chloroplastic 3 (Flaveria pringlei).